The sequence spans 150 residues: Ribonuclease HI (150 aa).

One can recognise an RNase H type-1 domain in the interval 1 to 142; the sequence is MSDSVELFTD…ADQLANRGVD (142 aa). Residues Asp10, Glu48, Asp70, and Asp134 each coordinate Mg(2+).

It belongs to the RNase H family. In terms of assembly, monomer. Mg(2+) is required as a cofactor.

It is found in the cytoplasm. It carries out the reaction Endonucleolytic cleavage to 5'-phosphomonoester.. Its function is as follows. Endonuclease that specifically degrades the RNA of RNA-DNA hybrids. The sequence is that of Ribonuclease HI from Pseudomonas syringae pv. tomato (strain ATCC BAA-871 / DC3000).